A 1073-amino-acid polypeptide reads, in one-letter code: Probable inorganic carbon transporter subunit DabA (1073 aa).

Zn(2+)-binding residues include C551, D553, H742, and C757.

Belongs to the inorganic carbon transporter (TC 9.A.2) DabA family. In terms of assembly, forms a complex with DabB. Requires Zn(2+) as cofactor.

The protein localises to the cell inner membrane. Its function is as follows. Part of an energy-coupled inorganic carbon pump. This Methylococcus capsulatus (strain ATCC 33009 / NCIMB 11132 / Bath) protein is Probable inorganic carbon transporter subunit DabA.